Here is a 455-residue protein sequence, read N- to C-terminus: GTPase Der (455 aa).

EngA-type G domains lie at F3–A167 and I184–N359. Residues G9 to S16, D56 to L60, N119 to E122, G190 to S197, D237 to L241, and N302 to D305 each bind GTP. Positions R360–A444 constitute a KH-like domain.

This sequence belongs to the TRAFAC class TrmE-Era-EngA-EngB-Septin-like GTPase superfamily. EngA (Der) GTPase family. In terms of assembly, associates with the 50S ribosomal subunit.

Its function is as follows. GTPase that plays an essential role in the late steps of ribosome biogenesis. This chain is GTPase Der, found in Nitrobacter winogradskyi (strain ATCC 25391 / DSM 10237 / CIP 104748 / NCIMB 11846 / Nb-255).